A 122-amino-acid chain; its full sequence is Urocortin (122 aa).

Positions Met-1 to Gln-25 are cleaved as a signal peptide. Positions Trp-26–Arg-80 are excised as a propeptide. Position 120 is a valine amide (Val-120).

Belongs to the sauvagine/corticotropin-releasing factor/urotensin I family. Interacts with CRHR1 and CRHR2 (via their N-terminal extracellular domain). In the organ of Corti, detected in the inner hair cell region (at protein level). Expressed in skin (at protein level).

It localises to the secreted. Acts in vitro to stimulate the secretion of adrenocorticotropic hormone (ACTH). Binds with high affinity to CRF receptor types 1, 2-alpha, and 2-beta. Plays a role in the establishment of normal hearing thresholds. Reduces food intake and regulates ghrelin levels in gastric body and plasma. The protein is Urocortin (Ucn) of Mus musculus (Mouse).